The primary structure comprises 407 residues: Bifunctional enzyme IspD/IspF (407 aa).

The segment at 1 to 247 (MVHIQADGAR…RLSHNALPDV (247 aa)) is 2-C-methyl-D-erythritol 4-phosphate cytidylyltransferase. A 2-C-methyl-D-erythritol 2,4-cyclodiphosphate synthase region spans residues 248-407 (RTGNGYDVHQ…ATVVFQGKPQ (160 aa)). A divalent metal cation contacts are provided by Asp254 and His256. 4-CDP-2-C-methyl-D-erythritol 2-phosphate is bound by residues 254–256 (DVH) and 280–281 (HS). His288 provides a ligand contact to a divalent metal cation. 4-CDP-2-C-methyl-D-erythritol 2-phosphate is bound by residues 302-304 (DIG), 378-381 (TTNE), Phe385, and Arg388.

In the N-terminal section; belongs to the IspD/TarI cytidylyltransferase family. IspD subfamily. This sequence in the C-terminal section; belongs to the IspF family. A divalent metal cation is required as a cofactor.

The catalysed reaction is 2-C-methyl-D-erythritol 4-phosphate + CTP + H(+) = 4-CDP-2-C-methyl-D-erythritol + diphosphate. It catalyses the reaction 4-CDP-2-C-methyl-D-erythritol 2-phosphate = 2-C-methyl-D-erythritol 2,4-cyclic diphosphate + CMP. It functions in the pathway isoprenoid biosynthesis; isopentenyl diphosphate biosynthesis via DXP pathway; isopentenyl diphosphate from 1-deoxy-D-xylulose 5-phosphate: step 2/6. It participates in isoprenoid biosynthesis; isopentenyl diphosphate biosynthesis via DXP pathway; isopentenyl diphosphate from 1-deoxy-D-xylulose 5-phosphate: step 4/6. Bifunctional enzyme that catalyzes the formation of 4-diphosphocytidyl-2-C-methyl-D-erythritol from CTP and 2-C-methyl-D-erythritol 4-phosphate (MEP) (IspD), and catalyzes the conversion of 4-diphosphocytidyl-2-C-methyl-D-erythritol 2-phosphate (CDP-ME2P) to 2-C-methyl-D-erythritol 2,4-cyclodiphosphate (ME-CPP) with a corresponding release of cytidine 5-monophosphate (CMP) (IspF). In Allorhizobium ampelinum (strain ATCC BAA-846 / DSM 112012 / S4) (Agrobacterium vitis (strain S4)), this protein is Bifunctional enzyme IspD/IspF.